Reading from the N-terminus, the 1242-residue chain is Phosphorylase b kinase regulatory subunit alpha, skeletal muscle isoform (1242 aa).

Serine 630, serine 731, serine 737, serine 740, serine 760, serine 813, serine 974, serine 983, and serine 987 each carry phosphoserine. The interval 812 to 842 is calmodulin-binding; sequence LSELYVKVGEIRHWGLIRYISGILRKKVEAL. Serine 1009 is modified (phosphoserine; by autocatalysis). The residue at position 1020 (serine 1020) is a Phosphoserine; by PKA. Phosphoserine is present on residues serine 1022 and serine 1025. The calmodulin-binding stretch occupies residues 1065 to 1105; sequence SKDSRQGQWQRRRRLDGALNRVPIGFYQKVWKILQKCHGLS. Serine 1132 bears the Phosphoserine mark. Cysteine 1239 carries the S-farnesyl cysteine lipid modification.

The protein belongs to the phosphorylase b kinase regulatory chain family. As to quaternary structure, hexadecamer of 4 heterotetramers, each composed of alpha, beta, gamma, and delta subunits. Alpha (PHKA1 or PHKA2) and beta (PHKB) are regulatory subunits, gamma (PHKG1 or PHKG2) is the catalytic subunit, and delta is calmodulin. Post-translationally, although the final Cys may be farnesylated, the terminal tripeptide is probably not removed, and the C-terminus is not methylated.

The protein resides in the cell membrane. The protein operates within glycan biosynthesis; glycogen metabolism. With respect to regulation, by phosphorylation of various serine residues and by calcium. Phosphorylase b kinase catalyzes the phosphorylation of serine in certain substrates, including troponin I. The alpha chain may bind calmodulin. The sequence is that of Phosphorylase b kinase regulatory subunit alpha, skeletal muscle isoform (Phka1) from Rattus norvegicus (Rat).